The primary structure comprises 248 residues: Triosephosphate isomerase (248 aa).

9 to 11 (NWK) serves as a coordination point for substrate. The active-site Electrophile is His-94. The Proton acceptor role is filled by Glu-166. Residues Gly-172, Ser-211, and 232–233 (GG) contribute to the substrate site.

Belongs to the triosephosphate isomerase family. In terms of assembly, homodimer.

It localises to the cytoplasm. The catalysed reaction is D-glyceraldehyde 3-phosphate = dihydroxyacetone phosphate. Its pathway is carbohydrate biosynthesis; gluconeogenesis. The protein operates within carbohydrate degradation; glycolysis; D-glyceraldehyde 3-phosphate from glycerone phosphate: step 1/1. Involved in the gluconeogenesis. Catalyzes stereospecifically the conversion of dihydroxyacetone phosphate (DHAP) to D-glyceraldehyde-3-phosphate (G3P). The sequence is that of Triosephosphate isomerase from Ruthia magnifica subsp. Calyptogena magnifica.